The chain runs to 412 residues: DNA primase DnaG (412 aa).

Residues 165–243 (PELIIVEGRA…KLDYVARAPT (79 aa)) enclose the Toprim domain. Residues Glu171, Asp216, and Asp218 each contribute to the Mg(2+) site.

Belongs to the archaeal DnaG primase family. As to quaternary structure, forms a ternary complex with MCM helicase and DNA. Component of the archaeal exosome complex. Mg(2+) serves as cofactor.

The catalysed reaction is ssDNA + n NTP = ssDNA/pppN(pN)n-1 hybrid + (n-1) diphosphate.. In terms of biological role, RNA polymerase that catalyzes the synthesis of short RNA molecules used as primers for DNA polymerase during DNA replication. Also part of the exosome, which is a complex involved in RNA degradation. Acts as a poly(A)-binding protein that enhances the interaction between heteromeric, adenine-rich transcripts and the exosome. The protein is DNA primase DnaG of Sulfolobus acidocaldarius (strain ATCC 33909 / DSM 639 / JCM 8929 / NBRC 15157 / NCIMB 11770).